A 49-amino-acid polypeptide reads, in one-letter code: MLRKKVTLSCEECHSMNYSTNKSLMSVDRITVKKFCRKCNKHTMHKEEK.

The protein belongs to the bacterial ribosomal protein bL33 family.

The chain is Large ribosomal subunit protein bL33A from Mycoplasmopsis agalactiae (strain NCTC 10123 / CIP 59.7 / PG2) (Mycoplasma agalactiae).